The sequence spans 179 residues: Large ribosomal subunit protein uL5 (179 aa).

The protein belongs to the universal ribosomal protein uL5 family. Part of the 50S ribosomal subunit; part of the 5S rRNA/L5/L18/L25 subcomplex. Contacts the 5S rRNA and the P site tRNA. Forms a bridge to the 30S subunit in the 70S ribosome.

This is one of the proteins that bind and probably mediate the attachment of the 5S RNA into the large ribosomal subunit, where it forms part of the central protuberance. In the 70S ribosome it contacts protein S13 of the 30S subunit (bridge B1b), connecting the 2 subunits; this bridge is implicated in subunit movement. Contacts the P site tRNA; the 5S rRNA and some of its associated proteins might help stabilize positioning of ribosome-bound tRNAs. This is Large ribosomal subunit protein uL5 from Desulfotalea psychrophila (strain LSv54 / DSM 12343).